The following is a 115-amino-acid chain: uncharacterized protein (115 aa).

The segment at 9 to 30 is disordered; the sequence is EGLRERGASGKNEQKKKKKEKI.

This is an uncharacterized protein from Saccharomyces cerevisiae (strain ATCC 204508 / S288c) (Baker's yeast).